We begin with the raw amino-acid sequence, 132 residues long: Small ribosomal subunit protein uS8 (132 aa).

The protein belongs to the universal ribosomal protein uS8 family. As to quaternary structure, part of the 30S ribosomal subunit. Contacts proteins S5 and S12.

Its function is as follows. One of the primary rRNA binding proteins, it binds directly to 16S rRNA central domain where it helps coordinate assembly of the platform of the 30S subunit. This is Small ribosomal subunit protein uS8 from Streptococcus gordonii (strain Challis / ATCC 35105 / BCRC 15272 / CH1 / DL1 / V288).